Consider the following 122-residue polypeptide: Holo-[acyl-carrier-protein] synthase (122 aa).

Residues D8 and E60 each contribute to the Mg(2+) site.

It belongs to the P-Pant transferase superfamily. AcpS family. It depends on Mg(2+) as a cofactor.

The protein localises to the cytoplasm. The enzyme catalyses apo-[ACP] + CoA = holo-[ACP] + adenosine 3',5'-bisphosphate + H(+). Its function is as follows. Transfers the 4'-phosphopantetheine moiety from coenzyme A to a Ser of acyl-carrier-protein. The polypeptide is Holo-[acyl-carrier-protein] synthase (Anaplasma phagocytophilum (strain HZ)).